The primary structure comprises 405 residues: Arrestin red cell isoform 2 (405 aa).

It belongs to the arrestin family.

It is found in the cytoplasm. This is Arrestin red cell isoform 2 from Oncorhynchus mykiss (Rainbow trout).